Consider the following 556-residue polypeptide: Formate--tetrahydrofolate ligase (556 aa).

65 to 72 (TPAGEGKT) is an ATP binding site.

Belongs to the formate--tetrahydrofolate ligase family.

It carries out the reaction (6S)-5,6,7,8-tetrahydrofolate + formate + ATP = (6R)-10-formyltetrahydrofolate + ADP + phosphate. It participates in one-carbon metabolism; tetrahydrofolate interconversion. In Agathobacter rectalis (strain ATCC 33656 / DSM 3377 / JCM 17463 / KCTC 5835 / VPI 0990) (Eubacterium rectale), this protein is Formate--tetrahydrofolate ligase.